A 493-amino-acid polypeptide reads, in one-letter code: Probable cytosol aminopeptidase (493 aa).

Residues Lys257 and Asp262 each coordinate Mn(2+). Lys269 is a catalytic residue. Positions 280, 339, and 341 each coordinate Mn(2+). The active site involves Arg343.

Belongs to the peptidase M17 family. It depends on Mn(2+) as a cofactor.

Its subcellular location is the cytoplasm. It catalyses the reaction Release of an N-terminal amino acid, Xaa-|-Yaa-, in which Xaa is preferably Leu, but may be other amino acids including Pro although not Arg or Lys, and Yaa may be Pro. Amino acid amides and methyl esters are also readily hydrolyzed, but rates on arylamides are exceedingly low.. It carries out the reaction Release of an N-terminal amino acid, preferentially leucine, but not glutamic or aspartic acids.. In terms of biological role, presumably involved in the processing and regular turnover of intracellular proteins. Catalyzes the removal of unsubstituted N-terminal amino acids from various peptides. This is Probable cytosol aminopeptidase (pepA) from Aquifex aeolicus (strain VF5).